We begin with the raw amino-acid sequence, 362 residues long: Phosphoserine aminotransferase (362 aa).

L-glutamate-binding residues include serine 9 and arginine 42. Residues 76 to 77 (GR), tryptophan 102, threonine 153, aspartate 174, and glutamine 197 each bind pyridoxal 5'-phosphate. The residue at position 198 (lysine 198) is an N6-(pyridoxal phosphate)lysine. 239 to 240 (NT) contacts pyridoxal 5'-phosphate.

Belongs to the class-V pyridoxal-phosphate-dependent aminotransferase family. SerC subfamily. As to quaternary structure, homodimer. Pyridoxal 5'-phosphate serves as cofactor.

It localises to the cytoplasm. The enzyme catalyses O-phospho-L-serine + 2-oxoglutarate = 3-phosphooxypyruvate + L-glutamate. It carries out the reaction 4-(phosphooxy)-L-threonine + 2-oxoglutarate = (R)-3-hydroxy-2-oxo-4-phosphooxybutanoate + L-glutamate. The protein operates within amino-acid biosynthesis; L-serine biosynthesis; L-serine from 3-phospho-D-glycerate: step 2/3. It functions in the pathway cofactor biosynthesis; pyridoxine 5'-phosphate biosynthesis; pyridoxine 5'-phosphate from D-erythrose 4-phosphate: step 3/5. In terms of biological role, catalyzes the reversible conversion of 3-phosphohydroxypyruvate to phosphoserine and of 3-hydroxy-2-oxo-4-phosphonooxybutanoate to phosphohydroxythreonine. This chain is Phosphoserine aminotransferase, found in Escherichia coli O6:K15:H31 (strain 536 / UPEC).